The sequence spans 175 residues: ATP-dependent protease subunit HslV (175 aa).

The active site involves T2. Residues A156, C159, and T162 each contribute to the Na(+) site.

This sequence belongs to the peptidase T1B family. HslV subfamily. A double ring-shaped homohexamer of HslV is capped on each side by a ring-shaped HslU homohexamer. The assembly of the HslU/HslV complex is dependent on binding of ATP.

The protein resides in the cytoplasm. It carries out the reaction ATP-dependent cleavage of peptide bonds with broad specificity.. Allosterically activated by HslU binding. Protease subunit of a proteasome-like degradation complex believed to be a general protein degrading machinery. In Rhizobium etli (strain CIAT 652), this protein is ATP-dependent protease subunit HslV.